We begin with the raw amino-acid sequence, 391 residues long: Probable sugar efflux transporter (391 aa).

A run of 12 helical transmembrane segments spans residues 16 to 36 (VFVF…PVAL), 51 to 71 (VGLM…PLML), 82 to 102 (LLFL…AWNF), 110 to 130 (MGIA…VIRV), 138 to 158 (QALG…LPLG), 170 to 190 (TFGV…KLLP), 210 to 230 (PLLM…FTTY), 247 to 267 (ITTL…FLFG), 277 to 297 (FIAF…VFKN), 300 to 320 (WVVF…GISL), 338 to 358 (IYSG…SIVI), and 361 to 381 (LGLG…LFWL).

The protein belongs to the major facilitator superfamily. SotB (TC 2.A.1.2) family.

It localises to the cell inner membrane. In terms of biological role, involved in the efflux of sugars. The physiological role may be the reduction of the intracellular concentration of toxic sugars or sugar metabolites. The chain is Probable sugar efflux transporter from Helicobacter pylori (strain ATCC 700392 / 26695) (Campylobacter pylori).